Consider the following 93-residue polypeptide: Putative membrane protein insertion efficiency factor (93 aa).

It belongs to the UPF0161 family.

It localises to the cell inner membrane. Its function is as follows. Could be involved in insertion of integral membrane proteins into the membrane. The protein is Putative membrane protein insertion efficiency factor of Cupriavidus taiwanensis (strain DSM 17343 / BCRC 17206 / CCUG 44338 / CIP 107171 / LMG 19424 / R1) (Ralstonia taiwanensis (strain LMG 19424)).